Here is an 86-residue protein sequence, read N- to C-terminus: Small ribosomal subunit protein bS20 (86 aa).

A disordered region spans residues M1 to K25.

Belongs to the bacterial ribosomal protein bS20 family.

Functionally, binds directly to 16S ribosomal RNA. The sequence is that of Small ribosomal subunit protein bS20 from Mycobacterium leprae (strain Br4923).